Here is a 172-residue protein sequence, read N- to C-terminus: Large ribosomal subunit protein uL10 (172 aa).

The protein belongs to the universal ribosomal protein uL10 family. As to quaternary structure, part of the ribosomal stalk of the 50S ribosomal subunit. The N-terminus interacts with L11 and the large rRNA to form the base of the stalk. The C-terminus forms an elongated spine to which L12 dimers bind in a sequential fashion forming a multimeric L10(L12)X complex.

Its function is as follows. Forms part of the ribosomal stalk, playing a central role in the interaction of the ribosome with GTP-bound translation factors. The polypeptide is Large ribosomal subunit protein uL10 (Francisella tularensis subsp. holarctica (strain FTNF002-00 / FTA)).